Here is a 274-residue protein sequence, read N- to C-terminus: Thiamine kinase (274 aa).

It belongs to the thiamine kinase family.

The catalysed reaction is thiamine + ATP = thiamine phosphate + ADP + H(+). Its pathway is cofactor biosynthesis; thiamine diphosphate biosynthesis; thiamine phosphate from thiamine: step 1/1. Its function is as follows. Catalyzes the ATP-dependent phosphorylation of thiamine to thiamine phosphate. Is involved in thiamine salvage. This is Thiamine kinase from Escherichia coli O6:K15:H31 (strain 536 / UPEC).